Here is a 162-residue protein sequence, read N- to C-terminus: Epoxidase pydX (162 aa).

The first 26 residues, 1–26 (MSLIALPLRLLRLLPAITSTWVLAFA), serve as a signal peptide directing secretion. 2 consecutive transmembrane segments (helical) span residues 62–82 (WILIVVYPINYALGVVNLFVG) and 89–109 (TGAMSWYTIGLLFSLAHMGYM). N127 and N139 each carry an N-linked (GlcNAc...) asparagine glycan.

Belongs to the epoxidase xenD family.

It is found in the membrane. It functions in the pathway mycotoxin biosynthesis. Its function is as follows. Epoxidase; part of the gene cluster that mediates the biosynthesis of pyrrocidines, fungal natural products containing a macrocyclic para-cyclophane connected to a decahydrofluorene ring system that show potent antibiotic activities toward Gram-negative bacteria. Within the pathway, pydX functions synergistically with pydB, pydE and pydZ to form the cyclophane. The pathway begins with the PKS-NRPS pydA which, with the help of the trans-enoyl reductase pydC, synthesizes the polyketide-tyrosyl acyl thioester product which can be reductively off-loaded by the terminal reductase (R) domain in pydA. The alpha/beta hydrolase pydG is then required to catalyze the subsequent Knoevenagel condensation that affords the 3-pyrrolin-2-one ring, whereas the four proteins pydB, pydE, pydX and pydZ then function synergistically to form the cyclophane. PydB and the membrane-bound pydX and pydZ are lipid-binding proteins that can sequester and mold the pdyG product into the inverse S-shape. Binding of the medium chain reductase pydE to the complex would trigger the cascade oxidative cyclization. PydY is involved in the Diels-Alder cycloaddition that forms the decahydrofluorene core. Additional non-enzymatic hydroxylation yields pyrrocidine A2 which can be further reduced into pyrrocidine B by an endogenous reductase. In Acremonium sp, this protein is Epoxidase pydX.